The chain runs to 322 residues: Zinc finger C2HC domain-containing protein zchc-1A (322 aa).

2 C2HC/C3H-type zinc fingers span residues 9–38 (PTFPCPICDRRFIKSSLEKHESACRKLASL) and 119–148 (DYVQCEYCSRNFNAAAAERHIPFCREQATR). Residues C13, C16, H28, C32, C123, C126, H138, and C142 each coordinate Zn(2+). The span at 150–159 (QGGNLKSSGG) shows a compositional bias: polar residues. Residues 150 to 322 (QGGNLKSSGG…SRNNSRSRIF (173 aa)) are disordered. The span at 174 to 220 (NEGKKQESSSRNGSAERKPTTRGRDGSLLRARRDDSNDITSRRKSLD) shows a compositional bias: basic and acidic residues. Polar residues-rich tracts occupy residues 221 to 238 (TRTSLTTGQASNRHTSLS) and 264 to 274 (LQQSSTPQQRL). Over residues 276–295 (TPASTTTTASRSGSRTSSRA) the composition is skewed to low complexity. A compositionally biased stretch (basic and acidic residues) spans 296–305 (CPRDDSRDSR). A compositionally biased stretch (low complexity) spans 311–322 (NNSRNNSRSRIF).

It belongs to the ZC2HC1 family. Requires Zn(2+) as cofactor.

This chain is Zinc finger C2HC domain-containing protein zchc-1A, found in Caenorhabditis elegans.